Consider the following 242-residue polypeptide: MNFEAASAPSQQPSPTPAPKTEEPKENGGSEQQADQPENSKKDDVVASGVKISEVKNNTATIEVTFSKFELADANKKDFVLEVIKKADTNPIQASDLKYDEASKTLSGKLSGLNSNVDYEISKLTLNGKEVKFNEEELLKSYVKNAKLFMTFNKENKKINVKLQNFDILNSLEENQPILTFDIEIKKDSSLQVVHKSLTKNQLSNLNGLEIDLKDKMNGNNANYDVKLTNAKLLNVNIETQK.

The segment covering 1 to 11 (MNFEAASAPSQ) has biased composition (low complexity). Positions 1 to 45 (MNFEAASAPSQQPSPTPAPKTEEPKENGGSEQQADQPENSKKDDV) are disordered.

This sequence to U.parvum UU171.

This is an uncharacterized protein from Ureaplasma parvum serovar 3 (strain ATCC 700970).